We begin with the raw amino-acid sequence, 279 residues long: MEQRYATSPEQVPGMDTAELRRRYLVEDLFAEGEVHAVYTHHDRVVLAGIVPTGDALDLPTFPEIASTTFFEHREAGIVNVGGPGTITVDGETHDLAHGSCLYVGRGADGVSFRSADPAGEAGPARFYLFSAPAHTAHPTTLVEAGGGTVRELGDQLTANRRTLNQYVHENGVKSCQVVMGVTTLHPGSTWNTMPAHTHDRRTEVYLYFGLPAGDRVVHLLGQPAETRHLLVADGQAVVSPSWSIHSGVGTAAYSFVWAMAGENQAFDDMDGVPVAELR.

Zn(2+)-binding residues include His197, His199, Glu204, and His246.

The protein belongs to the KduI family. Requires Zn(2+) as cofactor.

The catalysed reaction is 5-dehydro-4-deoxy-D-glucuronate = 3-deoxy-D-glycero-2,5-hexodiulosonate. It participates in glycan metabolism; pectin degradation; 2-dehydro-3-deoxy-D-gluconate from pectin: step 4/5. In terms of biological role, catalyzes the isomerization of 5-dehydro-4-deoxy-D-glucuronate to 3-deoxy-D-glycero-2,5-hexodiulosonate. The sequence is that of 4-deoxy-L-threo-5-hexosulose-uronate ketol-isomerase from Kineococcus radiotolerans (strain ATCC BAA-149 / DSM 14245 / SRS30216).